We begin with the raw amino-acid sequence, 160 residues long: Succinate dehydrogenase assembly factor 2-A, mitochondrial (160 aa).

The N-terminal 30 residues, 1 to 30, are a transit peptide targeting the mitochondrion; it reads MLRQLKLTLNISRWIFMPWQRQASASSSQV.

This sequence belongs to the SDHAF2 family. As to quaternary structure, interacts with the flavoprotein subunit within the SDH catalytic dimer.

The protein localises to the mitochondrion matrix. Plays an essential role in the assembly of succinate dehydrogenase (SDH), an enzyme complex (also referred to as respiratory complex II) that is a component of both the tricarboxylic acid (TCA) cycle and the mitochondrial electron transport chain, and which couples the oxidation of succinate to fumarate with the reduction of ubiquinone (coenzyme Q) to ubiquinol. Required for flavinylation (covalent attachment of FAD) of the flavoprotein subunit of the SDH catalytic dimer. The protein is Succinate dehydrogenase assembly factor 2-A, mitochondrial of Drosophila persimilis (Fruit fly).